The chain runs to 631 residues: tRNA uridine 5-carboxymethylaminomethyl modification enzyme MnmG (631 aa).

Position 15–20 (15–20 (GAGHAG)) interacts with FAD. The interval 214-233 (YSKTEEEPGDKEPRHFSFTS) is disordered. 276-290 (GPRYCPSIETKVVRF) is a binding site for NAD(+).

The protein belongs to the MnmG family. Homodimer. Heterotetramer of two MnmE and two MnmG subunits. The cofactor is FAD.

Its subcellular location is the cytoplasm. In terms of biological role, NAD-binding protein involved in the addition of a carboxymethylaminomethyl (cmnm) group at the wobble position (U34) of certain tRNAs, forming tRNA-cmnm(5)s(2)U34. The sequence is that of tRNA uridine 5-carboxymethylaminomethyl modification enzyme MnmG from Lactobacillus delbrueckii subsp. bulgaricus (strain ATCC BAA-365 / Lb-18).